The sequence spans 610 residues: Ectonucleoside triphosphate diphosphohydrolase 7 (610 aa).

The Cytoplasmic portion of the chain corresponds to Met-1–Arg-28. A helical membrane pass occupies residues Val-29–Leu-49. Residues Gln-50–Tyr-555 lie on the Vesicular side of the membrane. Glu-217 acts as the Proton acceptor in catalysis. N-linked (GlcNAc...) asparagine glycosylation is found at Asn-336 and Asn-400. A disulfide bridge connects residues Cys-454 and Cys-483. A helical transmembrane segment spans residues Asn-556–Leu-576. Residues Arg-577–Thr-610 lie on the Cytoplasmic side of the membrane.

It belongs to the GDA1/CD39 NTPase family. Ca(2+) serves as cofactor. The cofactor is Mg(2+).

It is found in the cytoplasmic vesicle membrane. The enzyme catalyses a ribonucleoside 5'-triphosphate + H2O = a ribonucleoside 5'-diphosphate + phosphate + H(+). It catalyses the reaction UTP + H2O = UDP + phosphate + H(+). The catalysed reaction is GTP + H2O = GDP + phosphate + H(+). It carries out the reaction CTP + H2O = CDP + phosphate + H(+). Catalyzes the hydrolysis of nucleoside triphosphates and diphosphates in a calcium- or magnesium-dependent manner. Preferentially hydrolyzes nucleoside 5'-triphosphates, with substrate preference for UTP &gt; GTP &gt; CTP. Hydrolyzes ATP and nucleoside diphosphates only to a minor extent. The polypeptide is Ectonucleoside triphosphate diphosphohydrolase 7 (entpd7) (Xenopus tropicalis (Western clawed frog)).